We begin with the raw amino-acid sequence, 802 residues long: Ras GTPase-activating protein 4 (802 aa).

C2 domains are found at residues 1–105 (MAKR…SGWT) and 116–232 (VQGE…EGWF). Ca(2+)-binding residues include Asp-21, Asp-27, Asp-74, Asp-76, Ser-79, Asp-82, Asp-149, Asp-155, Asp-202, Asp-204, Ser-207, and Asp-210. In terms of domain architecture, Ras-GAP spans 317 to 545 (GLAKDFLDLL…AQLKDFIMKL (229 aa)). One can recognise a PH domain in the interval 565 to 672 (PPVKEGPLFI…WLSALRKAST (108 aa)). The segment at 674–710 (NRGLLRSYHPGIFRGDKWSCCHQKDKTDQGCDKTHSR) adopts a Btk-type zinc-finger fold. 4 residues coordinate Zn(2+): His-682, Cys-693, Cys-694, and Cys-704.

Ca(2+) serves as cofactor. In terms of tissue distribution, isoform 2 is expressed in osteoblasts.

The protein localises to the cytoplasm. The protein resides in the cytosol. It localises to the cell membrane. In terms of biological role, ca(2+)-dependent Ras GTPase-activating protein, that switches off the Ras-MAPK pathway following a stimulus that elevates intracellular calcium. Functions as an adaptor for Cdc42 and Rac1 during FcR-mediated phagocytosis. Isoform 2 activates the Ras pathway and promotes RANKL shedding by modulating the expression of MMP14. This chain is Ras GTPase-activating protein 4 (Rasa4), found in Mus musculus (Mouse).